Consider the following 191-residue polypeptide: MEYFDMRKMSVNLWRNAAGETREICTFPPAKRDFYWRASITSIAANGEFSLFPGMERIVTLLEGGEMFLESADRFNHTLKPLQPFSFAADLVVKAKLTAGQMSMDFNIMTRLDVCKAKVRIAERTFTTFGSRGGVVFVINGAWQLGDKLLTTDQGACWFDGRHTLRLLQPQGKLLFSEINWLAGHSPDQVQ.

The protein belongs to the Ves family.

The protein is Protein Ves of Escherichia coli (strain UTI89 / UPEC).